Reading from the N-terminus, the 347-residue chain is Fructose-1,6-bisphosphatase class 1 (347 aa).

Glutamate 107, aspartate 128, leucine 130, and aspartate 131 together coordinate Mg(2+). Residues 131 to 134 (DGSS), asparagine 224, tyrosine 257, and lysine 286 each bind substrate. Glutamate 292 lines the Mg(2+) pocket.

This sequence belongs to the FBPase class 1 family. In terms of assembly, homotetramer. Requires Mg(2+) as cofactor.

It localises to the cytoplasm. The catalysed reaction is beta-D-fructose 1,6-bisphosphate + H2O = beta-D-fructose 6-phosphate + phosphate. It participates in carbohydrate biosynthesis; gluconeogenesis. In Sorangium cellulosum (strain So ce56) (Polyangium cellulosum (strain So ce56)), this protein is Fructose-1,6-bisphosphatase class 1.